The primary structure comprises 217 residues: Small ribosomal subunit protein uS3c (217 aa).

The 71-residue stretch at 39 to 109 (IRSCIEKQLH…QIRINLIEIT (71 aa)) folds into the KH type-2 domain.

Belongs to the universal ribosomal protein uS3 family. As to quaternary structure, part of the 30S ribosomal subunit.

The protein localises to the plastid. Its subcellular location is the chloroplast. This is Small ribosomal subunit protein uS3c (rps3) from Gracilaria tenuistipitata var. liui (Red alga).